We begin with the raw amino-acid sequence, 22 residues long: Hemoglobinase-like protein 2 (22 aa).

This sequence belongs to the peptidase C13 family.

The catalysed reaction is Hydrolysis of proteins and small molecule substrates at -Asn-|-Xaa- bonds.. The sequence is that of Hemoglobinase-like protein 2 from Fasciola hepatica (Liver fluke).